Reading from the N-terminus, the 492-residue chain is Probable cobyric acid synthase (492 aa).

In terms of domain architecture, GATase cobBQ-type spans 248–434 (PVRIAVVRLP…MHGLFQNPGA (187 aa)). The Nucleophile role is filled by cysteine 327. Histidine 426 is a catalytic residue.

The protein belongs to the CobB/CobQ family. CobQ subfamily.

It functions in the pathway cofactor biosynthesis; adenosylcobalamin biosynthesis. Its function is as follows. Catalyzes amidations at positions B, D, E, and G on adenosylcobyrinic A,C-diamide. NH(2) groups are provided by glutamine, and one molecule of ATP is hydrogenolyzed for each amidation. This Methanoculleus marisnigri (strain ATCC 35101 / DSM 1498 / JR1) protein is Probable cobyric acid synthase.